A 214-amino-acid polypeptide reads, in one-letter code: Putative 3-methyladenine DNA glycosylase (214 aa).

It belongs to the DNA glycosylase MPG family.

The polypeptide is Putative 3-methyladenine DNA glycosylase (Mycobacterium leprae (strain Br4923)).